Here is an 85-residue protein sequence, read N- to C-terminus: Beta-insect depressant toxin Lqh-dprIT3f (85 aa).

The N-terminal stretch at 1-21 is a signal peptide; it reads MKLLLLLTISASMLIEGLVNA. Positions 22 to 82 constitute an LCN-type CS-alpha/beta domain; the sequence is DGYIRGGDGC…EWDYETDTCG (61 aa). Cystine bridges form between Cys31–Cys81, Cys35–Cys56, Cys42–Cys63, and Cys46–Cys65. At Gly82 the chain carries Glycine amide.

This sequence belongs to the long (4 C-C) scorpion toxin superfamily. Sodium channel inhibitor family. Beta subfamily. Expressed by the venom gland.

The protein localises to the secreted. In terms of biological role, depressant insect beta-toxins cause a transient contraction paralysis followed by a slow flaccid paralysis. They bind voltage-independently at site-4 of sodium channels (Nav) and block action potentials, primarily by depolarizing the axonal membrane and suppressing the sodium current. This depressant toxin is active only on insects. It is found in a relatively small amount in the venom. This is Beta-insect depressant toxin Lqh-dprIT3f from Leiurus hebraeus (Hebrew deathstalker scorpion).